The chain runs to 372 residues: Phospho-N-acetylmuramoyl-pentapeptide-transferase (372 aa).

The next 10 helical transmembrane spans lie at Arg25–Ile45, Thr73–Leu93, Val98–Ile118, Phe134–Gln154, Ser176–Ile196, Gly211–Ser231, Leu251–His271, Val275–Met295, Ile300–Ile320, and Gln349–Leu369.

It belongs to the glycosyltransferase 4 family. MraY subfamily. The cofactor is Mg(2+).

It is found in the cell inner membrane. It catalyses the reaction UDP-N-acetyl-alpha-D-muramoyl-L-alanyl-gamma-D-glutamyl-meso-2,6-diaminopimeloyl-D-alanyl-D-alanine + di-trans,octa-cis-undecaprenyl phosphate = di-trans,octa-cis-undecaprenyl diphospho-N-acetyl-alpha-D-muramoyl-L-alanyl-D-glutamyl-meso-2,6-diaminopimeloyl-D-alanyl-D-alanine + UMP. It functions in the pathway cell wall biogenesis; peptidoglycan biosynthesis. Its function is as follows. Catalyzes the initial step of the lipid cycle reactions in the biosynthesis of the cell wall peptidoglycan: transfers peptidoglycan precursor phospho-MurNAc-pentapeptide from UDP-MurNAc-pentapeptide onto the lipid carrier undecaprenyl phosphate, yielding undecaprenyl-pyrophosphoryl-MurNAc-pentapeptide, known as lipid I. The sequence is that of Phospho-N-acetylmuramoyl-pentapeptide-transferase from Acinetobacter baumannii (strain AB0057).